The following is a 356-amino-acid chain: RuBisCO accumulation factor 1 (356 aa).

Positions 7–185 (ALTTEVLQRL…RQALEKLLTD (179 aa)) are N-terminal alpha-helix. A C-terminal beta-sheet region spans residues 209–342 (PYLVPVAGTA…LLLVLRPPQV (134 aa)).

The protein belongs to the RAF family. Homodimer. Forms an RbcL(8)-Raf1(8) complex. Forms complexes of many stoichiometries with RbcL with and without RbcS. RbcX and Raf1 can bind simultaneously to RbcL.

The protein localises to the cytoplasm. Functionally, a major RuBisCO chaperone. Acts after GroEL-GroES chaperonin to fold and/or assemble the large subunit of RuBisCO (ccbL, rbcL). Cooperates with RbcX in RbcL folding, plays the major role in assembly of dimers into RbcL(8)-Raf1(8) intermediate complexes. RbcS replaces Raf1, leading to holoenzyme formation. Its function is as follows. Required for optimal reconstitution of RuBisCO upon expression of rbcL-rbcS subunits in E.coli. Only interacts with the large subunit (cbbL, rbcL). Probably acts in the final stages of RuBisCO assembly, possibly participating in the addition of the small subunit (ccbS, rbcS). This Thermosynechococcus vestitus (strain NIES-2133 / IAM M-273 / BP-1) protein is RuBisCO accumulation factor 1.